The primary structure comprises 657 residues: Chemoreceptor McpA (657 aa).

Topologically, residues 1-5 are cytoplasmic; the sequence is MKRIR. Residues 6-29 traverse the membrane as a helical segment; the sequence is LVDLPLIIKIGFAPAFALLMLAVM. Residues 30 to 188 lie on the Periplasmic side of the membrane; sequence AGGAILVQKS…ESESAKRQAQ (159 aa). A helical membrane pass occupies residues 189 to 212; that stretch reads ATAAMSVTIIMSLLTLGAVGALAF. At 213–657 the chain is on the cytoplasmic side; sequence LTVMTTRKSI…APASDGWEEF (445 aa). 2 consecutive HAMP domains span residues 216–269 and 297–349; these read MTTR…HLEQ and QEAS…ETMK. The Methyl-accepting transducer domain occupies 354–583; that stretch reads STDGLSTGAD…QSTAATHSLK (230 aa). The residue at position 378 (Gln378) is a Glutamate methyl ester (Gln). Residues Glu385 and Glu392 each carry the glutamate methyl ester (Glu) modification. Gln574 bears the Glutamate methyl ester (Gln) mark. The disordered stretch occupies residues 634–657; it reads ARPGRSSGSAALAQAPASDGWEEF.

It belongs to the methyl-accepting chemotaxis (MCP) protein family.

The protein resides in the cell membrane. Functionally, chemotactic-signal transducers respond to changes in the concentration of attractants and repellents in the environment, transduce a signal from the outside to the inside of the cell, and facilitate sensory adaptation through the variation of the level of methylation. Attractants increase the level of methylation while repellents decrease the level of methylation. The polypeptide is Chemoreceptor McpA (mcpA) (Caulobacter vibrioides (strain ATCC 19089 / CIP 103742 / CB 15) (Caulobacter crescentus)).